A 219-amino-acid polypeptide reads, in one-letter code: 3-demethoxyubiquinol 3-hydroxylase (219 aa).

The disordered stretch occupies residues 21-51 (RTLTPGTTQAERTPAHAAPAPDAPEAGTLPS). Positions 35–46 (AHAAPAPDAPEA) are enriched in low complexity. Positions 68, 98, 101, 150, 182, and 185 each coordinate Fe cation.

This sequence belongs to the COQ7 family. It depends on Fe cation as a cofactor.

The protein resides in the cell membrane. The enzyme catalyses a 5-methoxy-2-methyl-3-(all-trans-polyprenyl)benzene-1,4-diol + AH2 + O2 = a 3-demethylubiquinol + A + H2O. The protein operates within cofactor biosynthesis; ubiquinone biosynthesis. Functionally, catalyzes the hydroxylation of 2-nonaprenyl-3-methyl-6-methoxy-1,4-benzoquinol during ubiquinone biosynthesis. The chain is 3-demethoxyubiquinol 3-hydroxylase from Alcanivorax borkumensis (strain ATCC 700651 / DSM 11573 / NCIMB 13689 / SK2).